The following is a 698-amino-acid chain: Polyribonucleotide nucleotidyltransferase (698 aa).

Mg(2+) is bound by residues aspartate 486 and aspartate 492. One can recognise a KH domain in the interval 553–612 (PRIIVRNIPKDRIGELIGPGGKNVRGISELTGAELYIEDDGKVTISGSNQESAEKAAKMV). Residues 622–690 (GKIYEGKVKR…KTGKIDLSRK (69 aa)) enclose the S1 motif domain.

It belongs to the polyribonucleotide nucleotidyltransferase family. Mg(2+) is required as a cofactor.

It localises to the cytoplasm. The catalysed reaction is RNA(n+1) + phosphate = RNA(n) + a ribonucleoside 5'-diphosphate. In terms of biological role, involved in mRNA degradation. Catalyzes the phosphorolysis of single-stranded polyribonucleotides processively in the 3'- to 5'-direction. This is Polyribonucleotide nucleotidyltransferase from Leptospira interrogans serogroup Icterohaemorrhagiae serovar copenhageni (strain Fiocruz L1-130).